A 30-amino-acid polypeptide reads, in one-letter code: Cyclotide cter-O (30 aa).

The segment at residues 1 to 30 (GIPCGESCVFIPCITGIAGCSCKSKVCYRN) is a cross-link (cyclopeptide (Gly-Asn)). 3 cysteine pairs are disulfide-bonded: cysteine 4–cysteine 20, cysteine 8–cysteine 22, and cysteine 13–cysteine 27.

This is a cyclic peptide.

The protein localises to the secreted. In terms of biological role, probably participates in a plant defense mechanism. This is Cyclotide cter-O from Clitoria ternatea (Butterfly pea).